Here is a 297-residue protein sequence, read N- to C-terminus: 1D-myo-inositol 2-acetamido-2-deoxy-alpha-D-glucopyranoside deacetylase (297 aa).

Residues His-11, Asp-14, and His-154 each contribute to the Zn(2+) site.

The protein belongs to the MshB deacetylase family. It depends on Zn(2+) as a cofactor.

It carries out the reaction 1D-myo-inositol 2-acetamido-2-deoxy-alpha-D-glucopyranoside + H2O = 1D-myo-inositol 2-amino-2-deoxy-alpha-D-glucopyranoside + acetate. Functionally, catalyzes the deacetylation of 1D-myo-inositol 2-acetamido-2-deoxy-alpha-D-glucopyranoside (GlcNAc-Ins) in the mycothiol biosynthesis pathway. The chain is 1D-myo-inositol 2-acetamido-2-deoxy-alpha-D-glucopyranoside deacetylase from Tsukamurella paurometabola (strain ATCC 8368 / DSM 20162 / CCUG 35730 / CIP 100753 / JCM 10117 / KCTC 9821 / NBRC 16120 / NCIMB 702349 / NCTC 13040) (Corynebacterium paurometabolum).